Reading from the N-terminus, the 229-residue chain is 5'-methylthioadenosine/S-adenosylhomocysteine nucleosidase (229 aa).

Residue Glu12 is the Proton acceptor of the active site. Residues Gly78, Met152, and 173–174 contribute to the substrate site; that span reads ME. Asp197 serves as the catalytic Proton donor.

Belongs to the PNP/UDP phosphorylase family. MtnN subfamily.

The enzyme catalyses S-adenosyl-L-homocysteine + H2O = S-(5-deoxy-D-ribos-5-yl)-L-homocysteine + adenine. It catalyses the reaction S-methyl-5'-thioadenosine + H2O = 5-(methylsulfanyl)-D-ribose + adenine. The catalysed reaction is 5'-deoxyadenosine + H2O = 5-deoxy-D-ribose + adenine. It participates in amino-acid biosynthesis; L-methionine biosynthesis via salvage pathway; S-methyl-5-thio-alpha-D-ribose 1-phosphate from S-methyl-5'-thioadenosine (hydrolase route): step 1/2. Its function is as follows. Catalyzes the irreversible cleavage of the glycosidic bond in both 5'-methylthioadenosine (MTA) and S-adenosylhomocysteine (SAH/AdoHcy) to adenine and the corresponding thioribose, 5'-methylthioribose and S-ribosylhomocysteine, respectively. Also cleaves 5'-deoxyadenosine, a toxic by-product of radical S-adenosylmethionine (SAM) enzymes, into 5-deoxyribose and adenine. The protein is 5'-methylthioadenosine/S-adenosylhomocysteine nucleosidase of Oceanobacillus iheyensis (strain DSM 14371 / CIP 107618 / JCM 11309 / KCTC 3954 / HTE831).